Consider the following 584-residue polypeptide: Transcription factor 7-like 1 (584 aa).

Positions 1–28 (MPQLGGGRGGAGGGGGGSGAGATSGGDD) are enriched in gly residues. The segment at 1-71 (MPQLGGGRGG…VKSSLVNESE (71 aa)) is CTNNB1-binding. Disordered regions lie at residues 1 to 99 (MPQL…RDYF), 159 to 179 (ATVKDTRSPSPAHLSNKVPVV), and 194 to 231 (YSNDHFSPASPPTHLSPEIDPKTGIPRPPHPSELSPYY). The segment covering 64-78 (SSLVNESENQSSSSD) has biased composition (low complexity). Positions 80 to 99 (EAERRPQPARDAFQKPRDYF) are enriched in basic and acidic residues. The HMG box DNA-binding region spans 342-410 (VKKPLNAFML…LHAQLYPTWS (69 aa)). The tract at residues 412–501 (RDNYGKKKKR…HSEQAQPLSL (90 aa)) is disordered. The Nuclear localization signal signature appears at 417–423 (KKKKRKR). Composition is skewed to low complexity over residues 427–437 (LSQTQSQQQIQ) and 470–491 (SALDSPATPSAALASPAAPAAT). Over residues 492–501 (HSEQAQPLSL) the composition is skewed to polar residues.

The protein belongs to the TCF/LEF family. Binds the armadillo repeat of CTNNB1 and forms a stable complex. Interacts with DAZAP2. Detected in the basal layer of epidermis and in outer root sheath and bulge of hair follicles.

Its subcellular location is the nucleus. Its function is as follows. Participates in the Wnt signaling pathway. Binds to DNA and acts as a repressor in the absence of CTNNB1, and as an activator in its presence. Necessary for the terminal differentiation of epidermal cells, the formation of keratohyalin granules and the development of the barrier function of the epidermis. This chain is Transcription factor 7-like 1 (Tcf7l1), found in Mus musculus (Mouse).